We begin with the raw amino-acid sequence, 504 residues long: MSFSVDVLANIAIELQRGIGHQDRFQRLITTLRQVLECDASALLRYDSRQFIPLAIDGLAKDVLGRRFALEGHPRLEAIARAGDVVRFPADSELPDPYDGLIPGQESLKVHACVGLPLFAGQNLIGALTLDGMQPDQFDVFSDEELRLIAALAAGALSNALLIEQLESQNMLPGDAAPFEALKETQMIGLSPGMTQLKKEIEIVAASDLNVLISGETGTGKELVAKAIHEASPRAVNPLVYLNCAALPESVAESELFGHVKGAFTGAISNRSGKFEMADNGTLFLDEIGELSLTLQAKLLRVLQYGDIQRVGDDRSLRVDVRVLAATNRDLREEVLAGRFRADLFHRLSVFPLLVPPLRERGDDVILLAGYFCEQCRLRLGLSRVVLSAGARNLLQHYSFPGNVRELEHAIHRAVVLSRATRSGDEVILEAQHFAFPEVTLPPPEAAAVPIVKQNLREATEEFQRKTIRQALAQNHHNWAASARMLETDVANLHRLAKRLGLKD.

D57 bears the 4-aspartylphosphate mark. In terms of domain architecture, Sigma-54 factor interaction spans 187-416; that stretch reads MIGLSPGMTQ…LEHAIHRAVV (230 aa). ATP is bound by residues 215 to 222 and 278 to 287; these read GETGTGKE and ADNGTLFLDE. The H-T-H motif DNA-binding region spans 479–498; the sequence is WAASARMLETDVANLHRLAK.

It functions in the pathway nitrogen metabolism; nitric oxide reduction. Its function is as follows. Required for the expression of anaerobic nitric oxide (NO) reductase, acts as a transcriptional activator for at least the norVW operon. Activation also requires sigma-54. The sequence is that of Anaerobic nitric oxide reductase transcription regulator NorR from Escherichia fergusonii (strain ATCC 35469 / DSM 13698 / CCUG 18766 / IAM 14443 / JCM 21226 / LMG 7866 / NBRC 102419 / NCTC 12128 / CDC 0568-73).